The sequence spans 300 residues: MPKANTAPPSGVERILRPEPLILRGSTLFEGDALTVLRRLPSGSVRCVVTSPPYWGLRDYGIEEQIGLEVTMPQFLHRLVAIFAEVKRVLTDDGTLWLNIGDGYTSGNRGYRAPDKKNPARAMDVRPDTPVGLKPKDLMGIPWRLAFALQDDGWYLRSDIVWNKPNAMPESVKDRPARSHEFLFMFTKSEKYFYDWQAAREPADGGGLRNRRSVWNVNTKPFAGAHFTTFPPELIRPCIHASTEPGDYVLDPFFGSGTVGLVCQDENRQYVGIELNPEYVTLAADRLQGQNSNVIRIAAA.

The disordered stretch occupies residues 109 to 129 (RGYRAPDKKNPARAMDVRPDT). Over residues 112 to 127 (RAPDKKNPARAMDVRP) the composition is skewed to basic and acidic residues.

The protein belongs to the N(4)/N(6)-methyltransferase family. N(4) subfamily.

It catalyses the reaction a 2'-deoxycytidine in DNA + S-adenosyl-L-methionine = an N(4)-methyl-2'-deoxycytidine in DNA + S-adenosyl-L-homocysteine + H(+). Its function is as follows. A beta subtype methylase, recognizes the double-stranded sequence 5'-CCCGGG-3', methylates C-2 on both strands, and protects the DNA from cleavage by the XcyI endonuclease. In Xanthomonas campestris pv. cyanopsidis, this protein is Type II methyltransferase M.XycI (xcyIM).